The chain runs to 314 residues: 2-desacetyl-2-hydroxyethyl bacteriochlorophyllide A dehydrogenase (314 aa).

It participates in porphyrin-containing compound metabolism; bacteriochlorophyll biosynthesis (light-independent). Its function is as follows. This protein catalyzes the penultimate step in bacteriochlorophyll a biosynthesis. This is 2-desacetyl-2-hydroxyethyl bacteriochlorophyllide A dehydrogenase (bchC) from Rhodobacter capsulatus (strain ATCC BAA-309 / NBRC 16581 / SB1003).